Reading from the N-terminus, the 283-residue chain is Large ribosomal subunit protein uL4 (283 aa).

It belongs to the universal ribosomal protein uL4 family. Part of the 50S ribosomal subunit.

In terms of biological role, one of the primary rRNA binding proteins, this protein initially binds near the 5'-end of the 23S rRNA. It is important during the early stages of 50S assembly. It makes multiple contacts with different domains of the 23S rRNA in the assembled 50S subunit and ribosome. Its function is as follows. Forms part of the polypeptide exit tunnel. In Pyrobaculum aerophilum (strain ATCC 51768 / DSM 7523 / JCM 9630 / CIP 104966 / NBRC 100827 / IM2), this protein is Large ribosomal subunit protein uL4.